A 36-amino-acid chain; its full sequence is Photosystem I reaction center subunit VIII (36 aa).

A helical transmembrane segment spans residues 8–28 (SVLVPLVGLVFPAIAMASLFL).

It belongs to the PsaI family.

The protein resides in the plastid. It is found in the chloroplast thylakoid membrane. May help in the organization of the PsaL subunit. In Helianthus annuus (Common sunflower), this protein is Photosystem I reaction center subunit VIII.